A 476-amino-acid chain; its full sequence is Cardiolipin synthase (476 aa).

2 consecutive transmembrane segments (helical) span residues 2–22 and 31–51; these read HLFI…IIFI and WAWI…YILF. PLD phosphodiesterase domains are found at residues 207–234 and 389–416; these read INYR…GDEY and EKGF…DIRS. Catalysis depends on residues H212, K214, D219, H394, K396, and D401.

The protein belongs to the phospholipase D family. Cardiolipin synthase subfamily.

Its subcellular location is the cell membrane. The catalysed reaction is 2 a 1,2-diacyl-sn-glycero-3-phospho-(1'-sn-glycerol) = a cardiolipin + glycerol. Functionally, catalyzes the reversible phosphatidyl group transfer from one phosphatidylglycerol molecule to another to form cardiolipin (CL) (diphosphatidylglycerol) and glycerol. This chain is Cardiolipin synthase (cls), found in Clostridium perfringens (strain 13 / Type A).